Reading from the N-terminus, the 714-residue chain is Probable serine/threonine-protein kinase mkcB (714 aa).

Basic residues predominate over residues 1–12 (MKSILKKAKHFF). 2 disordered regions span residues 1 to 267 (MKSI…SSTS) and 281 to 349 (GSGS…EQKP). The segment covering 23–35 (GGEKTAKESESQQ) has biased composition (basic and acidic residues). Residues 62–83 (SQSQPTTSALQTSTSLQPSSSL) are compositionally biased toward low complexity. Over residues 84–94 (HQIPQSQSSLE) the composition is skewed to polar residues. Low complexity-rich tracts occupy residues 95–111 (LTTN…TKQL) and 120–166 (PHSQ…TLTT). A compositionally biased stretch (polar residues) spans 167 to 177 (PVPSSENLATL). 2 stretches are compositionally biased toward low complexity: residues 178–241 (STST…QEQT) and 254–267 (LSQS…SSTS). Over residues 282–294 (SGSTKNKDSSSAP) the composition is skewed to polar residues. Low complexity-rich tracts occupy residues 300–314 (NNNN…KNRS) and 324–337 (NNNN…KNNN). The region spanning 438 to 687 (YKDSDQVGKG…AEELLKHPFI (250 aa)) is the Protein kinase domain. ATP contacts are provided by residues 444–452 (VGKGGFGTV) and Lys467. Catalysis depends on Asp558, which acts as the Proton acceptor.

This sequence belongs to the protein kinase superfamily. STE Ser/Thr protein kinase family. STE20 subfamily. Mg(2+) is required as a cofactor. Expressed at equal levels in prestalk and prespore cells.

The catalysed reaction is L-seryl-[protein] + ATP = O-phospho-L-seryl-[protein] + ADP + H(+). The enzyme catalyses L-threonyl-[protein] + ATP = O-phospho-L-threonyl-[protein] + ADP + H(+). The sequence is that of Probable serine/threonine-protein kinase mkcB from Dictyostelium discoideum (Social amoeba).